Consider the following 317-residue polypeptide: tRNA(Met) cytidine acetate ligase (317 aa).

ATP contacts are provided by residues 6 to 19 (IAEY…HIYQ), Gly100, Asn157, and Arg182.

Belongs to the TmcAL family.

It is found in the cytoplasm. It catalyses the reaction cytidine(34) in elongator tRNA(Met) + acetate + ATP = N(4)-acetylcytidine(34) in elongator tRNA(Met) + AMP + diphosphate. Catalyzes the formation of N(4)-acetylcytidine (ac(4)C) at the wobble position of elongator tRNA(Met), using acetate and ATP as substrates. First activates an acetate ion to form acetyladenylate (Ac-AMP) and then transfers the acetyl group to tRNA to form ac(4)C34. The polypeptide is tRNA(Met) cytidine acetate ligase (Mesomycoplasma hyopneumoniae (strain 232) (Mycoplasma hyopneumoniae)).